The primary structure comprises 150 residues: Ribonuclease K6 (150 aa).

The first 23 residues, 1–23, serve as a signal peptide directing secretion; sequence MVLCFPLLLLLLVLWGPVCLLHA. His-38 acts as the Proton acceptor in catalysis. Intrachain disulfides connect Cys-46-Cys-104, Cys-60-Cys-114, Cys-78-Cys-129, and Cys-85-Cys-92. N-linked (GlcNAc...) asparagine glycosylation is present at Asn-55. Substrate is bound by residues 61 to 65 and Lys-86; that span reads KHQNT. Asn-100 carries an N-linked (GlcNAc...) asparagine glycan. Residue Arg-105 coordinates substrate. The active-site Proton donor is the His-145.

This sequence belongs to the pancreatic ribonuclease family. Interacts (via N-terminus) with bacterial lipopolysaccharide (LPS).

It localises to the secreted. The protein localises to the lysosome. The protein resides in the cytoplasmic granule. Its function is as follows. Ribonuclease which shows a preference for the pyrimidines uridine and cytosine. Has potent antibacterial activity against a range of Gram-positive and Gram-negative bacteria, including P.aeruginosa, A.baumanii, M.luteus, S.aureus, E.faecalis, E.faecium, S.saprophyticus and E.coli. Causes loss of bacterial membrane integrity, and also promotes agglutination of Gram-negative bacteria. Probably contributes to urinary tract sterility. Bactericidal activity is independent of RNase activity. The chain is Ribonuclease K6 (RNASE6) from Macaca mulatta (Rhesus macaque).